We begin with the raw amino-acid sequence, 244 residues long: tRNA pseudouridine synthase A (244 aa).

The active-site Nucleophile is Asp-52. Position 110 (Tyr-110) interacts with substrate.

The protein belongs to the tRNA pseudouridine synthase TruA family. In terms of assembly, homodimer.

The catalysed reaction is uridine(38/39/40) in tRNA = pseudouridine(38/39/40) in tRNA. Functionally, formation of pseudouridine at positions 38, 39 and 40 in the anticodon stem and loop of transfer RNAs. In Brevibacillus brevis (strain 47 / JCM 6285 / NBRC 100599), this protein is tRNA pseudouridine synthase A.